The chain runs to 604 residues: Elongation factor 4 (604 aa).

Residues Ser-7–Ser-189 enclose the tr-type G domain. Residues Asp-19–Thr-24 and Asn-136–Asp-139 contribute to the GTP site.

The protein belongs to the TRAFAC class translation factor GTPase superfamily. Classic translation factor GTPase family. LepA subfamily.

It is found in the cell inner membrane. It carries out the reaction GTP + H2O = GDP + phosphate + H(+). Its function is as follows. Required for accurate and efficient protein synthesis under certain stress conditions. May act as a fidelity factor of the translation reaction, by catalyzing a one-codon backward translocation of tRNAs on improperly translocated ribosomes. Back-translocation proceeds from a post-translocation (POST) complex to a pre-translocation (PRE) complex, thus giving elongation factor G a second chance to translocate the tRNAs correctly. Binds to ribosomes in a GTP-dependent manner. The protein is Elongation factor 4 of Synechococcus sp. (strain ATCC 27144 / PCC 6301 / SAUG 1402/1) (Anacystis nidulans).